The chain runs to 340 residues: Probable quinone oxidoreductase (340 aa).

The protein belongs to the zinc-containing alcohol dehydrogenase family. Quinone oxidoreductase subfamily.

The catalysed reaction is 2 a quinone + NADPH + H(+) = 2 a 1,4-benzosemiquinone + NADP(+). This is Probable quinone oxidoreductase from Leishmania amazonensis.